Consider the following 142-residue polypeptide: Large ribosomal subunit protein uL13 (142 aa).

This sequence belongs to the universal ribosomal protein uL13 family. Part of the 50S ribosomal subunit.

This protein is one of the early assembly proteins of the 50S ribosomal subunit, although it is not seen to bind rRNA by itself. It is important during the early stages of 50S assembly. The polypeptide is Large ribosomal subunit protein uL13 (Sodalis glossinidius (strain morsitans)).